Here is a 423-residue protein sequence, read N- to C-terminus: MTESVLDYMTRLGRAAREASRVIGRASTAQKNRALQAAADALDAARAELTAANELDLAAGRASGLEPALLDRLALTPARIDGMITGLRQVASLPDPVGAIRDMSYRPSGIQVGKMRTPLGVIGIIYESRPNVTIDAASLCLKSGNATILRGGSEAIHSNRAIATCIQRGLAEAGLPAAVVQVVETTDREAVGALISMPEFVDVIVPRGGRGLIERISRDARVPVIKHLDGICHIYVSQHADLDKAWNVAFNAKTYRYGICGAMETLLVDQQVAERFLPEMARRFVEKGVELRGCERTQAIISAKPATEADWHTEYLDAILSIRVVDGLNQAIEHINHYGSHHTDSIISEHQGEARQFMAEVDSASVMLNTPTCFADGFEYGLGAEIGISTDKLHARGPVGLEGLTCEKYVVIGDGQLRGQGSC.

It belongs to the gamma-glutamyl phosphate reductase family.

It localises to the cytoplasm. It carries out the reaction L-glutamate 5-semialdehyde + phosphate + NADP(+) = L-glutamyl 5-phosphate + NADPH + H(+). Its pathway is amino-acid biosynthesis; L-proline biosynthesis; L-glutamate 5-semialdehyde from L-glutamate: step 2/2. Functionally, catalyzes the NADPH-dependent reduction of L-glutamate 5-phosphate into L-glutamate 5-semialdehyde and phosphate. The product spontaneously undergoes cyclization to form 1-pyrroline-5-carboxylate. The polypeptide is Gamma-glutamyl phosphate reductase (Pseudomonas putida (strain ATCC 47054 / DSM 6125 / CFBP 8728 / NCIMB 11950 / KT2440)).